We begin with the raw amino-acid sequence, 309 residues long: Probable manganese-dependent inorganic pyrophosphatase (309 aa).

Mn(2+) is bound by residues His-9, Asp-13, Asp-15, Asp-75, His-97, and Asp-149.

The protein belongs to the PPase class C family. Mn(2+) is required as a cofactor.

It localises to the cytoplasm. It catalyses the reaction diphosphate + H2O = 2 phosphate + H(+). The polypeptide is Probable manganese-dependent inorganic pyrophosphatase (Bacillus cereus (strain AH187)).